The following is a 468-amino-acid chain: Transmembrane protein 151A (468 aa).

The tract at residues 1 to 20 (MPEGEGGDCGEVPALVPDGE) is disordered. Helical transmembrane passes span 45–65 (CLLLTLLIHACGAVVAWCRLA) and 98–118 (YLYIPLAFVSLLYLLYLAECW). The interval 384-438 (VSSNSLPPARPSGPRLPFSRSRLSLGAGGRTTPGVFRSLSGGPLGRRGEDTEPLE) is disordered.

The protein belongs to the TMEM151 family. In terms of tissue distribution, highly expressed in the central nervous system (CNS) including the cerebral cortex, hippocampus, spinal cord, brainstem, and thalamus. Expression is relatively low during postnatal stages but highly expressed at postnatal day 14 (P14), and declined in adulthood. Also expressed in the stomach, heart, liver, spleen, lung, kidney, and muscle.

The protein localises to the endoplasmic reticulum membrane. Its subcellular location is the cell projection. The protein resides in the axon. It localises to the dendrite. The protein is Transmembrane protein 151A (Tmem151a) of Mus musculus (Mouse).